Consider the following 248-residue polypeptide: MGLSRVRAVFFDLDNTLIDTAGASRRGMLEVIKLLQSKYHYKEEAEVICDKVQVKLSKECFHPYSTCITDVRTSHWEEAIQETKGGADNRKLAEECYFLWKSTRLQHMTLEEDVKAMLTELRKEVRLLLLTNGDRQTQREKIEACACQSYFDAIVVGGEQKEEKPAPSIFYHCCDLLGVQPGDCVMVGDTLETDIQGGLNAGLKATVWINKSGGVPLTSSPMPHYMVSSVLELPALLQSIDCKVSMSV.

D12 is a binding site for Mg(2+). L13, D14, T131, N132, and K164 together coordinate phosphate. D14 serves as a coordination point for Mg(2+). D189 serves as a coordination point for Mg(2+).

The protein belongs to the HAD-like hydrolase superfamily. NANP family. Mg(2+) is required as a cofactor.

It carries out the reaction N-acetylneuraminate 9-phosphate + H2O = N-acetylneuraminate + phosphate. It catalyses the reaction N-glycoloylneuraminate 9-phosphate + H2O = N-glycoloylneuraminate + phosphate. Its pathway is amino-sugar metabolism; N-acetylneuraminate biosynthesis. Inhibited by calcium. Inhibited by vanadate, sodium orthovanadate and phosphonate. Its function is as follows. Catalyzes the dephosphorylation of N-acylneuraminate 9-phosphate (Neu5Ac-9-P) to N-acetylneuraminic acid (Neu5Ac or sialic acid). Can also use N-glycoloylneuraminate 9-phosphate as substrate. The polypeptide is N-acylneuraminate-9-phosphatase (Rattus norvegicus (Rat)).